The chain runs to 396 residues: Putative cyclin-B3-1 (396 aa).

Residues 1-98 are disordered; that stretch reads MLRDGNKQSK…KVLDVTAKPK (98 aa). Over residues 21–32 the composition is skewed to polar residues; the sequence is KTTVKTSLQNRS. A compositionally biased stretch (low complexity) spans 39–57; sequence VGRSKSRSISSIPSSAVAS. Residues 76–85 show a composition bias toward polar residues; sequence GESSSSGNKD.

It belongs to the cyclin family. Cyclin AB subfamily.

The polypeptide is Putative cyclin-B3-1 (CYCB3-1) (Arabidopsis thaliana (Mouse-ear cress)).